Consider the following 68-residue polypeptide: uncharacterized protein (68 aa).

This is an uncharacterized protein from Bacillus subtilis (strain 168).